The following is a 148-amino-acid chain: Large ribosomal subunit protein bL9 (148 aa).

It belongs to the bacterial ribosomal protein bL9 family.

In terms of biological role, binds to the 23S rRNA. The polypeptide is Large ribosomal subunit protein bL9 (Listeria innocua serovar 6a (strain ATCC BAA-680 / CLIP 11262)).